We begin with the raw amino-acid sequence, 282 residues long: MLLAVPSKGRLQEPTLKLLEAVGIRPLASDERALVVPTSWSDVNLIRARPEDIPYLVESGRVWAGITGHDYVVESGSNVAEVLELEFGRGKLVVAVPRSSGITSVEDLPPGARIATKFVNIAYNYFAELGKRVRIIRVTGSVEVLPQLGIADAILDVMATGTTLEVHGLVPIATVLETSARLVVNPQYVEHDLTKKLVTFIKGFYAAQGKKMVFLNVPASRLDAVLAVLPAMEAPSVTKLAKGDVYEVFSVVPEDVLPDLVMKLKEAGARDIVITPIEKLIV.

This sequence belongs to the ATP phosphoribosyltransferase family. Long subfamily. Requires Mg(2+) as cofactor.

The protein localises to the cytoplasm. It carries out the reaction 1-(5-phospho-beta-D-ribosyl)-ATP + diphosphate = 5-phospho-alpha-D-ribose 1-diphosphate + ATP. Its pathway is amino-acid biosynthesis; L-histidine biosynthesis; L-histidine from 5-phospho-alpha-D-ribose 1-diphosphate: step 1/9. Its activity is regulated as follows. Feedback inhibited by histidine. Catalyzes the condensation of ATP and 5-phosphoribose 1-diphosphate to form N'-(5'-phosphoribosyl)-ATP (PR-ATP). Has a crucial role in the pathway because the rate of histidine biosynthesis seems to be controlled primarily by regulation of HisG enzymatic activity. The polypeptide is ATP phosphoribosyltransferase (Pyrobaculum aerophilum (strain ATCC 51768 / DSM 7523 / JCM 9630 / CIP 104966 / NBRC 100827 / IM2)).